A 209-amino-acid chain; its full sequence is Probable glutathione peroxidase 8 (209 aa).

The residue at position 1 (M1) is an N-acetylmethionine. Residues 18 to 40 traverse the membrane as a helical segment; it reads IFAVLLSMVLCTVMLFLLQLKFL. Residue C79 is part of the active site.

The protein belongs to the glutathione peroxidase family.

It localises to the membrane. The catalysed reaction is 2 glutathione + H2O2 = glutathione disulfide + 2 H2O. This is Probable glutathione peroxidase 8 (Gpx8) from Mus musculus (Mouse).